Consider the following 353-residue polypeptide: Heat-inducible transcription repressor HrcA (353 aa).

Belongs to the HrcA family.

In terms of biological role, negative regulator of class I heat shock genes (grpE-dnaK-dnaJ and groELS operons). Prevents heat-shock induction of these operons. The protein is Heat-inducible transcription repressor HrcA of Anaeromyxobacter dehalogenans (strain 2CP-1 / ATCC BAA-258).